We begin with the raw amino-acid sequence, 603 residues long: Probable methyltransferase PMT20 (603 aa).

At Met-1–Arg-16 the chain is on the cytoplasmic side. Residues Ile-17 to Ile-37 form a helical; Signal-anchor for type II membrane protein membrane-spanning segment. Residues Phe-38–Ser-603 are Lumenal-facing. Asn-313 and Asn-600 each carry an N-linked (GlcNAc...) asparagine glycan.

Belongs to the methyltransferase superfamily.

The protein resides in the golgi apparatus membrane. The sequence is that of Probable methyltransferase PMT20 from Arabidopsis thaliana (Mouse-ear cress).